Reading from the N-terminus, the 824-residue chain is Glycophorin-binding protein 130 (824 aa).

Positions 84–88 (RILAE) match the PEXEL motif motif. Disordered stretches follow at residues 97–236 (EKTT…GQIM), 258–291 (NTDP…EYAS), 310–334 (DPND…PEGQ), 358–384 (NTDP…PEGQ), 408–431 (NTDP…SDPE), 457–482 (NTDP…DPEG), 507–532 (NTDP…DPEG), 559–582 (DPND…DPEG), 659–683 (DPND…PEGQ), 711–733 (NDEV…PEGQ), and 759–783 (DPND…PEGQ). Basic and acidic residues-rich tracts occupy residues 117–140 (TKKD…SEKQ) and 174–198 (KKEE…EPKA). Residues 200-228 (KVSQKPSTSTRSNNEVKIRAASNQETLTS) are compositionally biased toward polar residues. GBP repeat units follow at residues 226 to 275 (LTSA…NKED), 276 to 325 (LTSA…NKED), 326 to 375 (LTSA…NKED), 376 to 424 (LTSA…DNKE), 425 to 474 (LTSS…NKED), 475 to 524 (LTSA…NKED), 525 to 574 (LTSA…NKED), 575 to 624 (LTSA…NKEE), 625 to 674 (LTSS…NKED), 675 to 724 (LTSA…NKED), 725 to 774 (LTSA…NKED), and 775 to 824 (LTSA…NNEA). 10 stretches are compositionally biased toward basic and acidic residues: residues 264–276 (EVER…KEDL), 314–326 (DVER…KEDL), 364–376 (EVER…KEDL), 414–426 (EVER…KELT), 463–475 (EVER…KEDL), 513–525 (EVER…KEDL), 563–575 (EVER…KEDL), 663–675 (EVER…KEDL), 713–725 (EVER…KEDL), and 763–775 (DVER…KEDL).

In terms of assembly, interacts with host glycophorin.

It is found in the secreted. Its subcellular location is the cell surface. It localises to the host cytoplasm. Functionally, involved in merozoite invasion of host erythrocytes. The sequence is that of Glycophorin-binding protein 130 from Plasmodium falciparum (isolate 3D7).